Reading from the N-terminus, the 269-residue chain is Glutamate racemase (269 aa).

Substrate-binding positions include 14 to 15 (DS) and 46 to 47 (YS). Cys-78 functions as the Proton donor/acceptor in the catalytic mechanism. Substrate is bound at residue 79–80 (NT). Cys-189 (proton donor/acceptor) is an active-site residue. A substrate-binding site is contributed by 190-191 (TH).

This sequence belongs to the aspartate/glutamate racemases family.

The enzyme catalyses L-glutamate = D-glutamate. The protein operates within cell wall biogenesis; peptidoglycan biosynthesis. Provides the (R)-glutamate required for cell wall biosynthesis. In Haemophilus influenzae (strain PittGG), this protein is Glutamate racemase.